Reading from the N-terminus, the 89-residue chain is Small ribosomal subunit protein uS14A (89 aa).

This sequence belongs to the universal ribosomal protein uS14 family. In terms of assembly, part of the 30S ribosomal subunit. Contacts proteins S3 and S10.

Functionally, binds 16S rRNA, required for the assembly of 30S particles and may also be responsible for determining the conformation of the 16S rRNA at the A site. The sequence is that of Small ribosomal subunit protein uS14A from Streptococcus equi subsp. zooepidemicus (strain MGCS10565).